The sequence spans 569 residues: Glutamyl-tRNA reductase (569 aa).

Residues 49–52 (TCNR), S109, 114–116 (EGQ), and Q120 contribute to the substrate site. The active-site Nucleophile is C50. 192–197 (GAGSMS) serves as a coordination point for NADP(+). The tract at residues 284-397 (PVAVREETPA…VEAPRPAPAL (114 aa)) is insert. Residues 546 to 569 (AAVSRADDRDTSDSTENAKNRGRE) form a disordered region. A compositionally biased stretch (basic and acidic residues) spans 550–569 (RADDRDTSDSTENAKNRGRE).

Belongs to the glutamyl-tRNA reductase family. In terms of assembly, homodimer.

The enzyme catalyses (S)-4-amino-5-oxopentanoate + tRNA(Glu) + NADP(+) = L-glutamyl-tRNA(Glu) + NADPH + H(+). It participates in porphyrin-containing compound metabolism; protoporphyrin-IX biosynthesis; 5-aminolevulinate from L-glutamyl-tRNA(Glu): step 1/2. Functionally, catalyzes the NADPH-dependent reduction of glutamyl-tRNA(Glu) to glutamate 1-semialdehyde (GSA). This is Glutamyl-tRNA reductase from Streptomyces avermitilis (strain ATCC 31267 / DSM 46492 / JCM 5070 / NBRC 14893 / NCIMB 12804 / NRRL 8165 / MA-4680).